A 483-amino-acid chain; its full sequence is Alginate biosynthesis protein AlgA (483 aa).

The protein belongs to the mannose-6-phosphate isomerase type 2 family. In terms of assembly, monomer. It depends on Co(2+) as a cofactor.

The catalysed reaction is D-mannose 6-phosphate = D-fructose 6-phosphate. It carries out the reaction alpha-D-mannose 1-phosphate + GTP + H(+) = GDP-alpha-D-mannose + diphosphate. It participates in nucleotide-sugar biosynthesis; GDP-alpha-D-mannose biosynthesis; GDP-alpha-D-mannose from alpha-D-mannose 1-phosphate (GTP route): step 1/1. The protein operates within nucleotide-sugar biosynthesis; GDP-alpha-D-mannose biosynthesis; alpha-D-mannose 1-phosphate from D-fructose 6-phosphate: step 1/2. Its function is as follows. Produces a precursor for alginate polymerization. The alginate layer provides a protective barrier against host immune defenses and antibiotics. The protein is Alginate biosynthesis protein AlgA (algA) of Pseudomonas fluorescens.